Reading from the N-terminus, the 216-residue chain is ADP-ribosylation factor D (216 aa).

Over residues 188-204 (SKFSFSNKSKQQKSNSQ) the composition is skewed to low complexity. Residues 188–216 (SKFSFSNKSKQQKSNSQPNTPRKNIQMMT) are disordered. The span at 205 to 216 (PNTPRKNIQMMT) shows a compositional bias: polar residues.

The protein belongs to the small GTPase superfamily. Arf family.

It localises to the golgi apparatus. Functionally, GTP-binding protein involved in protein trafficking; may modulate vesicle budding and uncoating within the Golgi apparatus. The chain is ADP-ribosylation factor D (arrD) from Dictyostelium discoideum (Social amoeba).